The chain runs to 340 residues: Guanine nucleotide-binding protein G(I)/G(S)/G(T) subunit beta-1 (340 aa).

WD repeat units lie at residues 53 to 83 (GHLA…IIWD), 95 to 125 (LRSS…PIYN), 141 to 170 (GHTG…ALWD), 182 to 212 (GHTG…KLWD), 224 to 254 (GHES…RLFD), 268 to 298 (NIIC…NVWD), and 310 to 340 (GHDN…KIWN).

Belongs to the WD repeat G protein beta family. As to quaternary structure, g proteins are composed of 3 units, alpha, beta and gamma.

Its function is as follows. Guanine nucleotide-binding proteins (G proteins) are involved as a modulator or transducer in various transmembrane signaling systems. The beta and gamma chains are required for the GTPase activity, for replacement of GDP by GTP, and for G protein-effector interaction. In Xenopus laevis (African clawed frog), this protein is Guanine nucleotide-binding protein G(I)/G(S)/G(T) subunit beta-1 (gnb1).